Reading from the N-terminus, the 810-residue chain is RING finger protein unkempt homolog (810 aa).

Residues 1-24 (MSKGPGPGGSAASSAPPAATAQVL) form a disordered region. Residues 10–19 (SAASSAPPAA) show a composition bias toward low complexity. C3H1-type zinc fingers lie at residues 84-113 (YSPD…HRTT), 124-154 (YYKT…HGPH), 215-241 (NYKT…HNSK), 251-285 (KYRS…HTRT), and 293-321 (IYKS…HVEQ). The tract at residues 239 to 265 (NSKDRRRSPRKHKYRSSPCPNVKHGDE) is disordered. Phosphoserine is present on Ser-240. Residues 241 to 253 (KDRRRSPRKHKYR) show a composition bias toward basic residues. The disordered stretch occupies residues 324-343 (LSDDLQPSSAVSSPTQPGPV). Over residues 328-338 (LQPSSAVSSPT) the composition is skewed to polar residues. Residues Ser-374, Ser-378, Ser-385, and Ser-631 each carry the phosphoserine modification. Positions 643–723 (GAAELARLRQ…QEELERLHAG (81 aa)) form a coiled coil. Residues 766-801 (SVKCLKCQEQKRAVLPCQHAALCELCAEGSECPICQ) form an RING-type; degenerate zinc finger.

It belongs to the unkempt family.

It is found in the cytoplasm. Sequence-specific RNA-binding protein which plays an important role in the establishment and maintenance of the early morphology of cortical neurons during embryonic development. Acts as a translation repressor and controls a translationally regulated cell morphology program to ensure proper structuring of the nervous system. Translational control depends on recognition of its binding element within target mRNAs which consists of a mandatory UAG trimer upstream of a U/A-rich motif. Associated with polysomes. This chain is RING finger protein unkempt homolog (UNK), found in Homo sapiens (Human).